The primary structure comprises 343 residues: Glyceraldehyde-3-phosphate dehydrogenase (343 aa).

NAD(+)-binding positions include 13-14 and glycine 112; that span reads TI. 141–143 lines the D-glyceraldehyde 3-phosphate pocket; sequence SCN. Cysteine 142 serves as the catalytic Nucleophile. Position 170 (arginine 170) interacts with NAD(+). 196–197 contributes to the D-glyceraldehyde 3-phosphate binding site; the sequence is HA. Residue glutamine 303 coordinates NAD(+).

Belongs to the glyceraldehyde-3-phosphate dehydrogenase family. As to quaternary structure, homotetramer.

It localises to the cytoplasm. The enzyme catalyses D-glyceraldehyde 3-phosphate + phosphate + NADP(+) = (2R)-3-phospho-glyceroyl phosphate + NADPH + H(+). It carries out the reaction D-glyceraldehyde 3-phosphate + phosphate + NAD(+) = (2R)-3-phospho-glyceroyl phosphate + NADH + H(+). Its pathway is carbohydrate degradation; glycolysis; pyruvate from D-glyceraldehyde 3-phosphate: step 1/5. This Aeropyrum pernix (strain ATCC 700893 / DSM 11879 / JCM 9820 / NBRC 100138 / K1) protein is Glyceraldehyde-3-phosphate dehydrogenase (gap).